The sequence spans 206 residues: Putative apoptosis inhibitor 021L (206 aa).

Polar residues predominate over residues 95-105 (TSKSPVSNQPS). The tract at residues 95–114 (TSKSPVSNQPSPEEDEPIPD) is disordered. Residues 157 to 195 (CVVCQANVRNVVFVPCNHLATCISCSANPLMPKKCPMCR) form an RING-type zinc finger.

The protein belongs to the IIV-6 193R family.

In terms of biological role, plays a role early in infection by preventing host cell apoptosis. This chain is Putative apoptosis inhibitor 021L, found in Aedes vexans (Inland floodwater mosquito).